Here is a 234-residue protein sequence, read N- to C-terminus: Phosphoribosylaminoimidazole-succinocarboxamide synthase (234 aa).

The protein belongs to the SAICAR synthetase family.

The catalysed reaction is 5-amino-1-(5-phospho-D-ribosyl)imidazole-4-carboxylate + L-aspartate + ATP = (2S)-2-[5-amino-1-(5-phospho-beta-D-ribosyl)imidazole-4-carboxamido]succinate + ADP + phosphate + 2 H(+). It functions in the pathway purine metabolism; IMP biosynthesis via de novo pathway; 5-amino-1-(5-phospho-D-ribosyl)imidazole-4-carboxamide from 5-amino-1-(5-phospho-D-ribosyl)imidazole-4-carboxylate: step 1/2. In Clostridium botulinum (strain ATCC 19397 / Type A), this protein is Phosphoribosylaminoimidazole-succinocarboxamide synthase.